We begin with the raw amino-acid sequence, 122 residues long: Large ribosomal subunit protein bL12 (122 aa).

Belongs to the bacterial ribosomal protein bL12 family. In terms of assembly, homodimer. Part of the ribosomal stalk of the 50S ribosomal subunit. Forms a multimeric L10(L12)X complex, where L10 forms an elongated spine to which 2 to 4 L12 dimers bind in a sequential fashion. Binds GTP-bound translation factors.

Functionally, forms part of the ribosomal stalk which helps the ribosome interact with GTP-bound translation factors. Is thus essential for accurate translation. This Streptococcus sanguinis (strain SK36) protein is Large ribosomal subunit protein bL12.